The chain runs to 482 residues: UDP-N-acetylmuramate--L-alanine ligase (482 aa).

Residue 123–129 (GTHGKTT) coordinates ATP.

It belongs to the MurCDEF family.

It localises to the cytoplasm. The catalysed reaction is UDP-N-acetyl-alpha-D-muramate + L-alanine + ATP = UDP-N-acetyl-alpha-D-muramoyl-L-alanine + ADP + phosphate + H(+). The protein operates within cell wall biogenesis; peptidoglycan biosynthesis. Its function is as follows. Cell wall formation. This Pseudomonas putida (strain ATCC 700007 / DSM 6899 / JCM 31910 / BCRC 17059 / LMG 24140 / F1) protein is UDP-N-acetylmuramate--L-alanine ligase.